Reading from the N-terminus, the 227-residue chain is DNA utilization protein YhgH (227 aa).

The protein belongs to the ComF/GntX family.

Required for the use of extracellular DNA as a nutrient. Has been suggested to be involved in gluconate metabolism. The sequence is that of DNA utilization protein YhgH from Escherichia coli (strain K12).